Consider the following 672-residue polypeptide: Glycogen [starch] synthase (672 aa).

Lysine 56 is a UDP-alpha-D-glucose binding site. Residues methionine 645–glutamate 672 form a disordered region. Residues alanine 655–serine 665 are compositionally biased toward polar residues.

It belongs to the glycosyltransferase 3 family. In terms of assembly, forms a hetero-octamer with each protomer of the gsy-1 homotetramer bound to one molecule of gyg-1. The N-terminus is involved in interprotomer contacts with gyg-1. The interaction with gyg-1 is required for glycogen production but is not required for gsy-1 intrinsic activity.

The catalysed reaction is [(1-&gt;4)-alpha-D-glucosyl](n) + UDP-alpha-D-glucose = [(1-&gt;4)-alpha-D-glucosyl](n+1) + UDP + H(+). Its pathway is glycan biosynthesis; glycogen biosynthesis. Functionally, transfers the glycosyl residue from UDP-Glc to the non-reducing end of alpha-1,4-glucan. The polypeptide is Glycogen [starch] synthase (Caenorhabditis elegans).